A 512-amino-acid chain; its full sequence is Glutathione-binding protein GsiB (512 aa).

A signal peptide spans 1–26 (MTQFITHKWLAALGLASSIAAFPALA).

The protein belongs to the bacterial solute-binding protein 5 family. In terms of assembly, the complex is composed of two ATP-binding proteins (GsiA), two transmembrane proteins (GsiC and GsiD) and a solute-binding protein (GsiB).

It localises to the periplasm. Part of the ABC transporter complex GsiABCD involved in glutathione import. Binds glutathione. In Salmonella paratyphi A (strain ATCC 9150 / SARB42), this protein is Glutathione-binding protein GsiB.